A 233-amino-acid polypeptide reads, in one-letter code: Orotidine 5'-phosphate decarboxylase (233 aa).

Residues Asp11, Lys34, 61–70 (DLKLHDIPNT), Thr117, Arg179, Gln189, Gly209, and Arg210 each bind substrate. Catalysis depends on Lys63, which acts as the Proton donor.

The protein belongs to the OMP decarboxylase family. Type 1 subfamily. Homodimer.

The catalysed reaction is orotidine 5'-phosphate + H(+) = UMP + CO2. Its pathway is pyrimidine metabolism; UMP biosynthesis via de novo pathway; UMP from orotate: step 2/2. Functionally, catalyzes the decarboxylation of orotidine 5'-monophosphate (OMP) to uridine 5'-monophosphate (UMP). The chain is Orotidine 5'-phosphate decarboxylase from Streptococcus agalactiae serotype Ia (strain ATCC 27591 / A909 / CDC SS700).